We begin with the raw amino-acid sequence, 178 residues long: Large ribosomal subunit protein uL6 (178 aa).

It belongs to the universal ribosomal protein uL6 family. Part of the 50S ribosomal subunit.

Functionally, this protein binds to the 23S rRNA, and is important in its secondary structure. It is located near the subunit interface in the base of the L7/L12 stalk, and near the tRNA binding site of the peptidyltransferase center. This chain is Large ribosomal subunit protein uL6, found in Limosilactobacillus reuteri (strain DSM 20016) (Lactobacillus reuteri).